The chain runs to 501 residues: Lysine--tRNA ligase (501 aa).

Residues glutamate 411 and glutamate 418 each contribute to the Mg(2+) site.

This sequence belongs to the class-II aminoacyl-tRNA synthetase family. As to quaternary structure, homodimer. Mg(2+) serves as cofactor.

It localises to the cytoplasm. The enzyme catalyses tRNA(Lys) + L-lysine + ATP = L-lysyl-tRNA(Lys) + AMP + diphosphate. The sequence is that of Lysine--tRNA ligase from Aliivibrio salmonicida (strain LFI1238) (Vibrio salmonicida (strain LFI1238)).